Here is a 946-residue protein sequence, read N- to C-terminus: Bifunctional glutamine synthetase adenylyltransferase/adenylyl-removing enzyme (946 aa).

Residues 1 to 440 form an adenylyl removase region; it reads MKPLSSPLQQ…VFNELIGDDE (440 aa). An adenylyl transferase region spans residues 449–946; that stretch reads SEQWRELWQD…ASWQKWLVEE (498 aa).

The protein belongs to the GlnE family. Mg(2+) serves as cofactor.

The catalysed reaction is [glutamine synthetase]-O(4)-(5'-adenylyl)-L-tyrosine + phosphate = [glutamine synthetase]-L-tyrosine + ADP. The enzyme catalyses [glutamine synthetase]-L-tyrosine + ATP = [glutamine synthetase]-O(4)-(5'-adenylyl)-L-tyrosine + diphosphate. In terms of biological role, involved in the regulation of glutamine synthetase GlnA, a key enzyme in the process to assimilate ammonia. When cellular nitrogen levels are high, the C-terminal adenylyl transferase (AT) inactivates GlnA by covalent transfer of an adenylyl group from ATP to specific tyrosine residue of GlnA, thus reducing its activity. Conversely, when nitrogen levels are low, the N-terminal adenylyl removase (AR) activates GlnA by removing the adenylyl group by phosphorolysis, increasing its activity. The regulatory region of GlnE binds the signal transduction protein PII (GlnB) which indicates the nitrogen status of the cell. This is Bifunctional glutamine synthetase adenylyltransferase/adenylyl-removing enzyme from Escherichia coli (strain SE11).